A 798-amino-acid polypeptide reads, in one-letter code: Integrin beta-1 (798 aa).

An N-terminal signal peptide occupies residues Met1–Gly20. At Gln21 to Asp728 the chain is on the extracellular side. Residues Arg26–His76 enclose the PSI domain. 28 disulfides stabilise this stretch: Cys27–Cys45, Cys35–Cys464, Cys38–Cys64, Cys48–Cys75, Cys207–Cys213, Cys261–Cys301, Cys401–Cys415, Cys435–Cys462, Cys466–Cys486, Cys477–Cys489, Cys491–Cys500, Cys502–Cys533, Cys516–Cys531, Cys525–Cys536, Cys538–Cys553, Cys555–Cys576, Cys560–Cys574, Cys568–Cys579, Cys581–Cys590, Cys592–Cys615, Cys599–Cys613, Cys607–Cys618, Cys620–Cys630, Cys633–Cys636, Cys640–Cys691, Cys646–Cys665, Cys649–Cys661, and Cys699–Cys723. N-linked (GlcNAc...) asparagine glycosylation occurs at Asn50. Positions Cys75–Lys91 are enriched in basic and acidic residues. Residues Cys75 to Lys105 form a disordered region. Residues Asn94 and Asn97 are each glycosylated (N-linked (GlcNAc...) asparagine). The 239-residue stretch at Asp140–Leu378 folds into the VWFA domain. Residues Ser152 and Ser154 each contribute to the Mg(2+) site. Positions 154, 157, 158, and 189 each coordinate Ca(2+). Positions Cys207 to Cys213 are CX3CL1-binding. Asn212 carries an N-linked (GlcNAc...) asparagine glycan. Positions 244, 246, 248, and 249 each coordinate Ca(2+). Residue Glu249 participates in Mg(2+) binding. The N-linked (GlcNAc...) asparagine glycan is linked to Asn269. Residues Leu295–Tyr314 are CX3CL1-binding. Ala362 contributes to the Ca(2+) binding site. 3 N-linked (GlcNAc...) asparagine glycosylation sites follow: Asn363, Asn406, and Asn417. The interval Ile383–Glu465 is interaction with TMEM182. 4 consecutive I-EGF domains span residues Cys466 to Glu501, Cys502 to Glu554, Cys555 to Asp591, and Cys592 to Glu631. N-linked (GlcNAc...) asparagine glycosylation occurs at Asn481. Asn520 carries an N-linked (GlcNAc...) asparagine glycan. N-linked (GlcNAc...) asparagine glycosylation is present at Asn584. N-linked (GlcNAc...) asparagine glycosylation occurs at Asn669. The helical transmembrane segment at Ile729–Leu749 threads the bilayer. Residues Ile750–Lys798 are Cytoplasmic-facing. The segment at Glu762–Glu767 is signal for sorting from recycling endosomes; interaction with ACAP1. Thr777 is subject to Phosphothreonine. Residue Tyr783 is modified to Phosphotyrosine. Ser785 is subject to Phosphoserine. The tract at residues Ser785 to Asn792 is interaction with ITGB1BP1. Thr789 bears the Phosphothreonine mark. Lys794 bears the N6-acetyllysine; alternate mark. Residue Lys794 forms a Glycyl lysine isopeptide (Lys-Gly) (interchain with G-Cter in SUMO1); alternate linkage.

It belongs to the integrin beta chain family. Interacts with seprase FAP (seprase); the interaction occurs at the cell surface of invadopodia membrane in a collagen-dependent manner. Heterodimer of an alpha and a beta subunit. Beta-1 associates with either alpha-1, alpha-2, alpha-3, alpha-4, alpha-5, alpha-6, alpha-7, alpha-8, alpha-9, alpha-10, alpha-11 or alpha-V. ITGA6:ITGB1 is found in a complex with CD9; interaction takes place in oocytes and is involved in sperm-egg fusion. Binds LGALS3BP and NMRK2, when associated with alpha-7, but not with alpha-5. Interacts with FLNB, FLNC and RANBP9. Interacts with KRT1 in the presence of RACK1 and SRC. Interacts with JAML; integrin alpha-4/beta-1 may regulate leukocyte to endothelial cells adhesion by controlling JAML homodimerization. Interacts with RAB21. Interacts (via the cytoplasmic region) with RAB25 (via the hypervariable C-terminal region). Interacts with MYO10. Interacts with ITGB1BP1 (via C-terminal region); the interaction is a prerequisite for focal adhesion disassembly. Interacts with TLN1; the interaction is prevented by competitive binding of ITGB1BP1. Interacts with ACAP1; required for ITGB1 recycling. Interacts with ASAP3. Interacts with FERMT2; the interaction is inhibited in presence of ITGB1BP1. Interacts with DAB2. Interacts with FGR and HCK. Interacts with EMP2; the interaction may be direct or indirect and ITGB1 has a heterodimer form. ITGA5:ITGB1 interacts with CCN3. ITGA4:ITGB1 is found in a ternary complex with CX3CR1 and CX3CL1. ITGA5:ITGB1 interacts with FBN1. ITGA5:ITGB1 interacts with IL1B. Interacts with MDK. ITGA4:ITGB1 interacts with MDK; this interaction mediates MDK-induced osteoblast cells migration through PXN phosphorylation. ITGA6:ITGB1 interacts with MDK; this interaction mediates MDK-induced neurite-outgrowth. ITGA5:ITGB1 interacts with ACE2. Interacts with TMEM182 and LAMB1. Interacts with tensin TNS3; TNS3 also interacts with PEAK1, thus acting as an adapter molecule to bridge the association of PEAK1 with ITGB1. Interacts with tensin TNS4; the interaction displaces tensin TNS3 from the ITGB1 cytoplasmic tail and promotes ITGB1 stability. Integrin ITGA9:ITGB1 interacts with SPP1/OPN (via N-terminus). Integrin ITGA9:ITGB1 interacts with TNC/TNFN3 (via the 3rd Fibronectin type-III domain). Integrins ITGA4:ITGB1 and ITGA9:ITGB1 interact with SVEP1 (via Sushi domain 21); thereby inhibit Ca(2+) intracellular signaling and as a result repress vasocontraction. ITGA4:ITGB1 and ITGA5:ITGB1 interacts with SELP. Interacts with CD248. ITGA5:ITGB1 interacts with IGFBP1. ITGA4:ITGB1 interacts with BCAM. Interacts with ADGRG6. In terms of assembly, interacts with the C-terminal region of FLNC. Interacts with filamin FLNA isoform 3/VAR-1. As to quaternary structure, interacts with ACE2. Interacts with alpha-7B in cardiomyocytes of adult heart and alpha-7A and alpha-7B in adult skeletal muscle. Interacts with filamin FLNA isoform 3/VAR-1.

It localises to the cell membrane. The protein localises to the cell projection. Its subcellular location is the invadopodium membrane. The protein resides in the ruffle membrane. It is found in the recycling endosome. It localises to the melanosome. The protein localises to the lamellipodium. Its subcellular location is the ruffle. The protein resides in the cell junction. It is found in the focal adhesion. It localises to the sarcolemma. In terms of biological role, integrins alpha-1/beta-1, alpha-2/beta-1, alpha-10/beta-1 and alpha-11/beta-1 are receptors for collagen. Integrins alpha-1/beta-1 and alpha-2/beta-2 recognize the proline-hydroxylated sequence G-F-P-G-E-R in collagen. Integrins alpha-2/beta-1, alpha-3/beta-1, alpha-4/beta-1, alpha-5/beta-1, alpha-8/beta-1, alpha-10/beta-1, alpha-11/beta-1 and alpha-V/beta-1 are receptors for fibronectin. Alpha-4/beta-1 recognizes one or more domains within the alternatively spliced CS-1 and CS-5 regions of fibronectin. Integrin alpha-5/beta-1 is a receptor for fibrinogen. Integrin alpha-1/beta-1, alpha-2/beta-1, alpha-6/beta-1 and alpha-7/beta-1 are receptors for lamimin. Integrin alpha-6/beta-1 (ITGA6:ITGB1) is present in oocytes and is involved in sperm-egg fusion. Integrin alpha-4/beta-1 is a receptor for VCAM1 and recognizes the sequence Q-I-D-S in VCAM1. Integrin alpha-9/beta-1 is a receptor for VCAM1, cytotactin and osteopontin. It recognizes the sequence A-E-I-D-G-I-E-L in cytotactin. Integrin alpha-3/beta-1 is a receptor for epiligrin, thrombospondin and CSPG4. Integrin alpha-3/beta-1 provides a docking site for FAP (seprase) at invadopodia plasma membranes in a collagen-dependent manner and hence may participate in the adhesion, formation of invadopodia and matrix degradation processes, promoting cell invasion. Alpha-3/beta-1 may mediate with LGALS3 the stimulation by CSPG4 of endothelial cells migration. Integrin alpha-V/beta-1 is a receptor for vitronectin. Beta-1 integrins recognize the sequence R-G-D in a wide array of ligands. When associated with alpha-7/beta-1 integrin, regulates cell adhesion and laminin matrix deposition. Involved in promoting endothelial cell motility and angiogenesis. Involved in osteoblast compaction through the fibronectin fibrillogenesis cell-mediated matrix assembly process and the formation of mineralized bone nodules. May be involved in up-regulation of the activity of kinases such as PKC via binding to KRT1. Together with KRT1 and RACK1, serves as a platform for SRC activation or inactivation. Plays a mechanistic adhesive role during telophase, required for the successful completion of cytokinesis. ITGA4:ITGB1 binds to fractalkine (CX3CL1) and may act as its coreceptor in CX3CR1-dependent fractalkine signaling. ITGA4:ITGB1 and ITGA5:ITGB1 bind to PLA2G2A via a site (site 2) which is distinct from the classical ligand-binding site (site 1) and this induces integrin conformational changes and enhanced ligand binding to site 1. ITGA5:ITGB1 acts as a receptor for fibrillin-1 (FBN1) and mediates R-G-D-dependent cell adhesion to FBN1. ITGA5:ITGB1 acts as a receptor for fibronectin FN1 and mediates R-G-D-dependent cell adhesion to FN1. ITGA5:ITGB1 is a receptor for IL1B and binding is essential for IL1B signaling. ITGA5:ITGB3 is a receptor for soluble CD40LG and is required for CD40/CD40LG signaling. Plays an important role in myoblast differentiation and fusion during skeletal myogenesis. ITGA9:ITGB1 may play a crucial role in SVEP1/polydom-mediated myoblast cell adhesion. Integrins ITGA9:ITGB1 and ITGA4:ITGB1 repress PRKCA-mediated L-type voltage-gated channel Ca(2+) influx and ROCK-mediated calcium sensitivity in vascular smooth muscle cells via their interaction with SVEP1, thereby inhibit vasocontraction. This chain is Integrin beta-1 (ITGB1), found in Bos taurus (Bovine).